Consider the following 151-residue polypeptide: Transcriptional repressor NrdR (151 aa).

A zinc finger lies at 3 to 34; sequence CPYCAYGESKVVDSRSTEDGSSIRRRRECLKC. Positions 49–139 constitute an ATP-cone domain; that stretch reads ILVIKKNMSR…VYRQFKDINT (91 aa).

Belongs to the NrdR family. Requires Zn(2+) as cofactor.

Negatively regulates transcription of bacterial ribonucleotide reductase nrd genes and operons by binding to NrdR-boxes. The protein is Transcriptional repressor NrdR of Clostridium botulinum (strain Loch Maree / Type A3).